Consider the following 79-residue polypeptide: Small ribosomal subunit protein uS17 (79 aa).

It belongs to the universal ribosomal protein uS17 family. As to quaternary structure, part of the 30S ribosomal subunit.

One of the primary rRNA binding proteins, it binds specifically to the 5'-end of 16S ribosomal RNA. The polypeptide is Small ribosomal subunit protein uS17 (Rhizobium rhizogenes (strain K84 / ATCC BAA-868) (Agrobacterium radiobacter)).